The chain runs to 469 residues: 3-isopropylmalate dehydratase large subunit (469 aa).

[4Fe-4S] cluster-binding residues include C349, C409, and C412. Residues 424–443 are disordered; the sequence is QISASSSNRNFKGRQGSPSG.

It belongs to the aconitase/IPM isomerase family. LeuC type 1 subfamily. In terms of assembly, heterodimer of LeuC and LeuD. [4Fe-4S] cluster serves as cofactor.

It catalyses the reaction (2R,3S)-3-isopropylmalate = (2S)-2-isopropylmalate. It functions in the pathway amino-acid biosynthesis; L-leucine biosynthesis; L-leucine from 3-methyl-2-oxobutanoate: step 2/4. Functionally, catalyzes the isomerization between 2-isopropylmalate and 3-isopropylmalate, via the formation of 2-isopropylmaleate. This is 3-isopropylmalate dehydratase large subunit from Thermosynechococcus vestitus (strain NIES-2133 / IAM M-273 / BP-1).